Here is a 149-residue protein sequence, read N- to C-terminus: Small ribosomal subunit protein bS16 (149 aa).

The segment at 115-149 is disordered; the sequence is KLKAAKSEADAKAKAEAEAAATEEAPAEEPAAEAE. Over residues 119–131 the composition is skewed to basic and acidic residues; sequence AKSEADAKAKAEA. Over residues 139–149 the composition is skewed to acidic residues; sequence APAEEPAAEAE.

This sequence belongs to the bacterial ribosomal protein bS16 family.

This chain is Small ribosomal subunit protein bS16, found in Bifidobacterium adolescentis (strain ATCC 15703 / DSM 20083 / NCTC 11814 / E194a).